The chain runs to 299 residues: Bifunctional protein FolD (299 aa).

NADP(+)-binding positions include 168–170, S193, and I234; that span reads GRS.

This sequence belongs to the tetrahydrofolate dehydrogenase/cyclohydrolase family. In terms of assembly, homodimer.

The catalysed reaction is (6R)-5,10-methylene-5,6,7,8-tetrahydrofolate + NADP(+) = (6R)-5,10-methenyltetrahydrofolate + NADPH. It carries out the reaction (6R)-5,10-methenyltetrahydrofolate + H2O = (6R)-10-formyltetrahydrofolate + H(+). Its pathway is one-carbon metabolism; tetrahydrofolate interconversion. In terms of biological role, catalyzes the oxidation of 5,10-methylenetetrahydrofolate to 5,10-methenyltetrahydrofolate and then the hydrolysis of 5,10-methenyltetrahydrofolate to 10-formyltetrahydrofolate. The sequence is that of Bifunctional protein FolD from Bartonella quintana (strain Toulouse) (Rochalimaea quintana).